The chain runs to 392 residues: F-box protein At5g65850 (392 aa).

In terms of domain architecture, F-box spans 29–78; sequence TEKSVQIPVDIIIEILLRLPAKSIATCRCVSKLWISVICRQDFTELFLTR.

This Arabidopsis thaliana (Mouse-ear cress) protein is F-box protein At5g65850.